Reading from the N-terminus, the 407-residue chain is O-antigen polymerase (407 aa).

The next 11 helical transmembrane spans lie at 2–22, 31–51, 63–83, 101–121, 141–161, 168–185, 190–204, 211–231, 319–339, 356–376, and 382–402; these read LIISYIALCLLFIVYLYTLSV, VMVPYLIITVPTLYVFEGIFV, YLFFYTCYITYIASFVISYLY, YVFTSLLFTFLAFIIYLPVLM, YGIYFYPSLMFSLVASICAFF, LFCISIVLFNCILIFLHG, IFSIFIAFILYLSYI, FMFLVKSFAVIAVIVTAFFAY, ADFGLFTPVWLVISGVFKGVL, FIMFLFCIGISVIPVSMGWLF, and IAFMVYIASSFVFSEHIRFVL.

The protein localises to the cell inner membrane. It catalyses the reaction n lipid-linked O-antigen repeat units = a lipid-linked O antigen + (n-1) polyisoprenyl diphosphate.. It functions in the pathway bacterial outer membrane biogenesis; LPS O-antigen biosynthesis. In terms of biological role, polymerase involved in the biosynthesis of the lipopolysaccharide (LPS). Catalyzes the polymerization of the O-antigen repeat units on the periplasmic face of the inner membrane, leading to the formation of the lipid-linked O-antigen molecule. This chain is O-antigen polymerase (rfc), found in Salmonella typhi.